A 147-amino-acid polypeptide reads, in one-letter code: Monothiol glutaredoxin-S5 (147 aa).

The region spanning 49–146 (AAEVRRAVAE…PILKKAGALW (98 aa)) is the Glutaredoxin domain. Cys69 is a binding site for [2Fe-2S] cluster. Positions 144-147 (ALWL) match the Responsive for interaction with TGA factors motif.

It belongs to the glutaredoxin family. CC-type subfamily.

Its subcellular location is the cytoplasm. It is found in the nucleus. Functionally, may only reduce GSH-thiol disulfides, but not protein disulfides. This is Monothiol glutaredoxin-S5 (GRXS5) from Oryza sativa subsp. japonica (Rice).